The sequence spans 205 residues: Guanylate kinase (205 aa).

Residues 6–184 enclose the Guanylate kinase-like domain; sequence GLLIVLSGPA…AVERIKAIVT (179 aa). An ATP-binding site is contributed by 13-20; it reads GPAGVGKG.

Belongs to the guanylate kinase family.

Its subcellular location is the cytoplasm. It catalyses the reaction GMP + ATP = GDP + ADP. Functionally, essential for recycling GMP and indirectly, cGMP. In Shouchella clausii (strain KSM-K16) (Alkalihalobacillus clausii), this protein is Guanylate kinase.